The primary structure comprises 588 residues: Glutamyl-tRNA(Gln) amidotransferase subunit B, mitochondrial (588 aa).

A mitochondrion-targeting transit peptide spans 1 to 109 (MLRSWIGSGT…RAPTSTSETP (109 aa)). Over residues 22-35 (SSLPSPKASFSSAP) the composition is skewed to low complexity. The tract at residues 22–50 (SSLPSPKASFSSAPNRYLQPPTSADRVPL) is disordered.

It belongs to the GatB/GatE family. GatB subfamily. As to quaternary structure, subunit of the heterotrimeric GatCAB amidotransferase (AdT) complex, composed of A, B and C subunits.

It is found in the mitochondrion. The enzyme catalyses L-glutamyl-tRNA(Gln) + L-glutamine + ATP + H2O = L-glutaminyl-tRNA(Gln) + L-glutamate + ADP + phosphate + H(+). Allows the formation of correctly charged Gln-tRNA(Gln) through the transamidation of misacylated Glu-tRNA(Gln) in the mitochondria. The reaction takes place in the presence of glutamine and ATP through an activated gamma-phospho-Glu-tRNA(Gln). The protein is Glutamyl-tRNA(Gln) amidotransferase subunit B, mitochondrial of Penicillium rubens (strain ATCC 28089 / DSM 1075 / NRRL 1951 / Wisconsin 54-1255) (Penicillium chrysogenum).